The primary structure comprises 435 residues: Glutamyl-tRNA reductase (435 aa).

Residues 49-52 (TCNR), Ser-109, 114-116 (ETQ), and Gln-120 contribute to the substrate site. Cys-50 serves as the catalytic Nucleophile. 189–194 (GAGEMS) is a binding site for NADP(+).

The protein belongs to the glutamyl-tRNA reductase family. In terms of assembly, homodimer.

The catalysed reaction is (S)-4-amino-5-oxopentanoate + tRNA(Glu) + NADP(+) = L-glutamyl-tRNA(Glu) + NADPH + H(+). Its pathway is porphyrin-containing compound metabolism; protoporphyrin-IX biosynthesis; 5-aminolevulinate from L-glutamyl-tRNA(Glu): step 1/2. In terms of biological role, catalyzes the NADPH-dependent reduction of glutamyl-tRNA(Glu) to glutamate 1-semialdehyde (GSA). This is Glutamyl-tRNA reductase from Listeria monocytogenes serotype 4a (strain HCC23).